The primary structure comprises 266 residues: MKNSIKNIFESERGLLLLPFVSLGTPNTQINKQAIIAMDKNGANIIELGIPYSDPVADGPVIQDAYNKAIKNGVNIRKAFKILMNLKGKIKSPIIVFIYYNQLLNYGINKFLEKLIQLEVQGIIVPDLPYDESQILKKKCTINNIALISLIALTSSFSRIKKIARNAEGFLYLISKTGVTGGTGKLMNKLKIIIKTIQKLTSKPVVVGFGINSRRQIKQLIEWNSNGIVIGSPCVQILLQSSKEVCVIKLSGLIKQIKESTSSTSN.

Catalysis depends on proton acceptor residues glutamate 47 and aspartate 58.

Belongs to the TrpA family. In terms of assembly, tetramer of two alpha and two beta chains.

Its subcellular location is the plastid. It is found in the chloroplast. It catalyses the reaction (1S,2R)-1-C-(indol-3-yl)glycerol 3-phosphate + L-serine = D-glyceraldehyde 3-phosphate + L-tryptophan + H2O. It functions in the pathway amino-acid biosynthesis; L-tryptophan biosynthesis; L-tryptophan from chorismate: step 5/5. The alpha subunit is responsible for the aldol cleavage of indoleglycerol phosphate to indole and glyceraldehyde 3-phosphate. This is Tryptophan synthase alpha chain from Cyanidium caldarium (Red alga).